Here is a 289-residue protein sequence, read N- to C-terminus: Bidirectional sugar transporter SWEET10 (289 aa).

Over 1–5 (MAISQ) the chain is Extracellular. Residues 6–26 (AVLATVFGILGNIISFFVCLA) traverse the membrane as a helical segment. Positions 11 to 96 (VFGILGNIIS…SLFFFYAPKK (86 aa)) constitute a MtN3/slv 1 domain. The Cytoplasmic segment spans residues 27 to 43 (PIPTFVRIYKRKSSEGY). Residues 44–64 (QSIPYVISLFSAMLWMYYAMI) traverse the membrane as a helical segment. Residues 65 to 70 (KKDAMM) lie on the Extracellular side of the membrane. The helical transmembrane segment at 71–91 (LITINSFAFVVQIVYISLFFF) threads the bilayer. The Cytoplasmic segment spans residues 92–103 (YAPKKEKTLTVK). A helical membrane pass occupies residues 104-124 (FVLFVDVLGFGAIFVLTYFII). Topologically, residues 125 to 131 (HANKRVQ) are extracellular. In terms of domain architecture, MtN3/slv 2 spans 131–214 (QVLGYICMVF…QMILFLIYKK (84 aa)). A helical membrane pass occupies residues 132 to 152 (VLGYICMVFALSVFVAPLGII). The Cytoplasmic portion of the chain corresponds to 153–165 (RKVIKTKSAEFMP). The chain crosses the membrane as a helical span at residues 166-186 (FGLSFFLTLSAVMWFFYGLLL). Residues 187-190 (KDMN) are Extracellular-facing. Residues 191–211 (IALPNVLGFIFGVLQMILFLI) traverse the membrane as a helical segment. The Cytoplasmic portion of the chain corresponds to 212–289 (YKKPGTKVLE…EKEVFLISKN (78 aa)).

Belongs to the SWEET sugar transporter family. As to quaternary structure, forms heterooligomers with SWEET8.

The protein localises to the cell membrane. Its function is as follows. Mediates both low-affinity uptake and efflux of sugar across the plasma membrane. The protein is Bidirectional sugar transporter SWEET10 of Arabidopsis thaliana (Mouse-ear cress).